The primary structure comprises 1149 residues: Protein deacetylase HDAC6 (1149 aa).

Residues 1–61 are disordered; the sequence is MTSTGQDSST…KGKMKKLSQP (61 aa). The span at 18–29 shows a compositional bias: polar residues; sequence NPQSPLQESSAT. Position 21 is a phosphoserine (serine 21). At arginine 32 the chain carries Omega-N-methylarginine. The residue at position 43 (serine 43) is a Phosphoserine. A Nuclear export signal motif is present at residues 66–75; it reads LVVGLQGLDL. 2 histone deacetylase regions span residues 87–403 and 481–799; these read LVFD…TLLG and GLVY…SLLG. Catalysis depends on histidine 215, which acts as the 1. Histidine 610 acts as the 2 in catalysis. Residues 954 to 975 form a disordered region; that stretch reads ALGETEPTPPASHTNKQTTGAS. 4 positions are modified to phosphothreonine: threonine 958, threonine 961, threonine 967, and threonine 971. The segment covering 964–975 has biased composition (polar residues); the sequence is ASHTNKQTTGAS. Serine 975 bears the Phosphoserine mark. A UBP-type zinc finger spans residues 1045–1143; sequence SWCPHLMAVC…NAAHQNKFGE (99 aa). Cysteine 1047, histidine 1049, cysteine 1067, cysteine 1070, cysteine 1079, cysteine 1082, and cysteine 1087 together coordinate Zn(2+). The segment at 1088–1090 is ubiquitin binding; sequence SRY. Zn(2+) contacts are provided by histidine 1094, histidine 1098, histidine 1104, cysteine 1117, and cysteine 1120. A ubiquitin binding region spans residues 1116–1123; that stretch reads WCYVCQAY. Serine 1148 is subject to Phosphoserine.

Belongs to the histone deacetylase family. HD type 2 subfamily. In terms of assembly, forms a trimeric complex in the nucleus consisting of BANP, HDAC6 and KHDRBS1/SAM68; HDAC6 keeps KHDRBS1 in a deacetylated state which inhibits the inclusion of CD44 alternate exons. The complex is disrupted by MAPK1/MAPK3-mediated phosphorylation of BANP which results in BANP export to the cytoplasm. This facilitates acetylation of KHDRBS1 and CD44 variant exon inclusion. Interacts with SIRT2 (via both phosphorylated, unphosphorylated, active or inactive forms); the interaction is necessary for the complex to interact with alpha-tubulin. Under proteasome impairment conditions, interacts with UBD via its histone deacetylase 1 and UBP-type zinc-finger regions. Interacts with BBIP1, CBFA2T3, CYLD, DDIT3/CHOP, ZMYND15, F-actin and HDAC11. Interacts with RIPOR2; this interaction occurs during early myogenic differentiation and prevents HDAC6 to deacetylate tubulin. Interacts with AURKA; AURKA-mediated phosphorylation of HDAC6 promotes deacetylation of alpha-tubulin. Interacts with DYSF; this interaction occurs during early myogenic differentiation. Interacts with TPPP; inhibiting the tubulin deacetylase activity of HDAC6. Interacts with DYNLL1. Interacts with ATP13A2; the interaction results in recruitment of HDAC6 to lysosomes to promote CTTN deacetylation. Interacts with CCDC141 (via the N-terminal region); inhibiting the deacetylase activity of HDAC6. Interacts with IPO7; the interaction facilitates HDAC6 nuclear translocation in dental papilla cells. The cofactor is Zn(2+). Phosphorylated by AURKA; phosphorylation increases HDAC6-mediated deacetylation of alpha-tubulin and subsequent disassembly of cilia. In terms of processing, ubiquitinated. Its polyubiquitination however does not lead to its degradation. Post-translationally, sumoylated in vitro. Expressed in neurons of the cortex. Expressed in Purkinje cells. Detected in keratinocytes (at protein level).

The protein localises to the cytoplasm. The protein resides in the cytoskeleton. It localises to the nucleus. Its subcellular location is the perikaryon. It is found in the cell projection. The protein localises to the dendrite. The protein resides in the axon. It localises to the cilium. Its subcellular location is the microtubule organizing center. It is found in the centrosome. The protein localises to the cilium basal body. The enzyme catalyses N(6)-acetyl-L-lysyl-[protein] + H2O = L-lysyl-[protein] + acetate. It catalyses the reaction N(6)-acetyl-L-lysyl-[alpha-tubulin] + H2O = L-lysyl-[alpha-tubulin] + acetate. It participates in protein modification; protein ubiquitination. Deacetylates a wide range of non-histone substrates. Plays a central role in microtubule-dependent cell motility by mediating deacetylation of tubulin. Required for cilia disassembly via deacetylation of alpha-tubulin. Alpha-tubulin deacetylation results in destabilization of dynamic microtubules. Promotes deacetylation of CTTN, leading to actin polymerization, promotion of autophagosome-lysosome fusion and completion of autophagy. Deacetylates SQSTM1. Deacetylates peroxiredoxins PRDX1 and PRDX2, decreasing their reducing activity. Deacetylates antiviral protein RIGI in the presence of viral mRNAs which is required for viral RNA detection by RIGI. Sequentially deacetylates and polyubiquitinates DNA mismatch repair protein MSH2 which leads to MSH2 degradation, reducing cellular sensitivity to DNA-damaging agents and decreasing cellular DNA mismatch repair activities. Deacetylates DNA mismatch repair protein MLH1 which prevents recruitment of the MutL alpha complex (formed by the MLH1-PMS2 heterodimer) to the MutS alpha complex (formed by the MSH2-MSH6 heterodimer), leading to tolerance of DNA damage. Deacetylates RHOT1/MIRO1 which blocks mitochondrial transport and mediates axon growth inhibition. Deacetylates transcription factor SP1 which leads to increased expression of ENG, positively regulating angiogenesis. Deacetylates KHDRBS1/SAM68 which regulates alternative splicing by inhibiting the inclusion of CD44 alternate exons. Promotes odontoblast differentiation following IPO7-mediated nuclear import and subsequent repression of RUNX2 expression. In addition to its protein deacetylase activity, plays a key role in the degradation of misfolded proteins: when misfolded proteins are too abundant to be degraded by the chaperone refolding system and the ubiquitin-proteasome, mediates the transport of misfolded proteins to a cytoplasmic juxtanuclear structure called aggresome. Probably acts as an adapter that recognizes polyubiquitinated misfolded proteins and target them to the aggresome, facilitating their clearance by autophagy. This Mus musculus (Mouse) protein is Protein deacetylase HDAC6.